Reading from the N-terminus, the 412-residue chain is MEDTTFLEGANLAGITTLMNNLHINEQANLEELEKQVMGKQQSFPTDHFDEELNGLAKSLGINFNDPEFSLDSAHSVISKKPSGRGSDKVHGGIRRDSVCTDSICSDSVCSGSIRSGSIRSGSIRDGSIRDGSIRSGNIRDGSVRSSKTRRGPARNSSSRNDRGYSLSTHRKKYAESEASQKTAISKRDRKNHYAESEYSEKSIKPSTKQVDRLINHLRSNGDPNSFYKKEHDYERKTKLVKLEKINMLLTYLGNEQISTDDIKIPTIDSSMQEIDDVIEMLTLRNVGIRYSSIAEEILIGLARGLEIVFDGTREIPFLNYRPDYTGLHNTFMIKLFKMRYETSQVVGNLVQNMSPLSKICLELGPSLLLYPALIRTKHKASEDLYNLLQKGPEDPFTAYNEIHETLKKNNK.

7 repeat units span residues 112-116 (GSIRS), 117-121 (GSIRS), 122-126 (GSIRD), 127-131 (GSIRD), 132-136 (GSIRS), 137-141 (GNIRD), and 142-146 (GSVRS). The 7 X 5 AA tandem repeats of G-[NS]-[IV]-R-[DNS] stretch occupies residues 112-146 (GSIRSGSIRSGSIRDGSIRDGSIRSGNIRDGSVRS). Low complexity predominate over residues 116 to 126 (SGSIRSGSIRD). The disordered stretch occupies residues 116–208 (SGSIRSGSIR…YSEKSIKPST (93 aa)). The segment covering 192–208 (NHYAESEYSEKSIKPST) has biased composition (basic and acidic residues).

This sequence belongs to the asfivirus B407L family.

This is an uncharacterized protein from Ornithodoros (relapsing fever ticks).